Consider the following 321-residue polypeptide: Phospho-N-acetylmuramoyl-pentapeptide-transferase (321 aa).

10 helical membrane passes run 6–26, 53–73, 77–97, 121–141, 144–164, 175–195, 200–220, 226–246, 251–271, and 301–321; these read MLIPMVSAFAITIMFMPLFIG, TMGGLIFIAAIIVSAIWVGIW, LTLSVWVSLFILVLYGLLGFY, ILGAIIFLIAYFHEGFDHTLW, IIGNVSAAWFYVLFVIVWLVG, LDGLVAGQTTISFGTYAIIAA, TDVLIVCLVTIGAMLGFLMFN, IFMGDLGSLALGGMLAVVAIL, WSLLLIGIIYVTETASVILQV, and IDLTFWLVGLIGSGIYLAFFL.

This sequence belongs to the glycosyltransferase 4 family. MraY subfamily. Mg(2+) is required as a cofactor.

It localises to the cell membrane. The catalysed reaction is UDP-N-acetyl-alpha-D-muramoyl-L-alanyl-gamma-D-glutamyl-L-lysyl-D-alanyl-D-alanine + di-trans,octa-cis-undecaprenyl phosphate = Mur2Ac(oyl-L-Ala-gamma-D-Glu-L-Lys-D-Ala-D-Ala)-di-trans,octa-cis-undecaprenyl diphosphate + UMP. It participates in cell wall biogenesis; peptidoglycan biosynthesis. Functionally, catalyzes the initial step of the lipid cycle reactions in the biosynthesis of the cell wall peptidoglycan: transfers peptidoglycan precursor phospho-MurNAc-pentapeptide from UDP-MurNAc-pentapeptide onto the lipid carrier undecaprenyl phosphate, yielding undecaprenyl-pyrophosphoryl-MurNAc-pentapeptide, known as lipid I. The sequence is that of Phospho-N-acetylmuramoyl-pentapeptide-transferase from Lacticaseibacillus paracasei (strain ATCC 334 / BCRC 17002 / CCUG 31169 / CIP 107868 / KCTC 3260 / NRRL B-441) (Lactobacillus paracasei).